A 357-amino-acid polypeptide reads, in one-letter code: S-adenosyl-L-methionine:benzoic acid/salicylic acid carboxyl methyltransferase 3 (357 aa).

Residue Y18 participates in S-adenosyl-L-homocysteine binding. Q25 contributes to the benzoate binding site. Positions 59, 64, 96, 97, 135, and 136 each coordinate S-adenosyl-L-homocysteine. Position 157 (W157) interacts with benzoate. The Mg(2+) site is built by N168, D254, F256, and N257. Residue Q260 participates in benzoate binding.

It belongs to the methyltransferase superfamily. Type-7 methyltransferase family.

The enzyme catalyses benzoate + S-adenosyl-L-methionine = methyl benzoate + S-adenosyl-L-homocysteine. The protein operates within aromatic compound metabolism. Converts benzoic acid into the volatile ester methyl benzoates. This scent, mostly produced in a rhythmical, diurnal manner, attracts the pollinators. The protein is S-adenosyl-L-methionine:benzoic acid/salicylic acid carboxyl methyltransferase 3 of Petunia hybrida (Petunia).